Reading from the N-terminus, the 354-residue chain is Uroporphyrinogen decarboxylase (354 aa).

Substrate-binding positions include 27-31 (RQAGR), Asp77, Tyr154, Ser209, and His327.

Belongs to the uroporphyrinogen decarboxylase family. In terms of assembly, homodimer.

The protein resides in the cytoplasm. The enzyme catalyses uroporphyrinogen III + 4 H(+) = coproporphyrinogen III + 4 CO2. The protein operates within porphyrin-containing compound metabolism; protoporphyrin-IX biosynthesis; coproporphyrinogen-III from 5-aminolevulinate: step 4/4. Functionally, catalyzes the decarboxylation of four acetate groups of uroporphyrinogen-III to yield coproporphyrinogen-III. The polypeptide is Uroporphyrinogen decarboxylase (Pseudomonas savastanoi pv. phaseolicola (strain 1448A / Race 6) (Pseudomonas syringae pv. phaseolicola (strain 1448A / Race 6))).